The sequence spans 115 residues: T cell receptor beta variable 7-7 (115 aa).

A signal peptide spans Met-1–Ala-21. The Ig-like domain occupies Gly-22 to Leu-115. An intrachain disulfide couples Cys-42 to Cys-111.

Alpha-beta TR is a heterodimer composed of an alpha and beta chain; disulfide-linked. The alpha-beta TR is associated with the transmembrane signaling CD3 coreceptor proteins to form the TR-CD3 (TcR or TCR). The assembly of alpha-beta TR heterodimers with CD3 occurs in the endoplasmic reticulum where a single alpha-beta TR heterodimer associates with one CD3D-CD3E heterodimer, one CD3G-CD3E heterodimer and one CD247 homodimer forming a stable octameric structure. CD3D-CD3E and CD3G-CD3E heterodimers preferentially associate with TR alpha and TR beta chains, respectively. The association of the CD247 homodimer is the last step of TcR assembly in the endoplasmic reticulum and is required for transport to the cell surface.

The protein localises to the cell membrane. Functionally, v region of the variable domain of T cell receptor (TR) beta chain that participates in the antigen recognition. Alpha-beta T cell receptors are antigen specific receptors which are essential to the immune response and are present on the cell surface of T lymphocytes. Recognize peptide-major histocompatibility (MH) (pMH) complexes that are displayed by antigen presenting cells (APC), a prerequisite for efficient T cell adaptive immunity against pathogens. Binding of alpha-beta TR to pMH complex initiates TR-CD3 clustering on the cell surface and intracellular activation of LCK that phosphorylates the ITAM motifs of CD3G, CD3D, CD3E and CD247 enabling the recruitment of ZAP70. In turn ZAP70 phosphorylates LAT, which recruits numerous signaling molecules to form the LAT signalosome. The LAT signalosome propagates signal branching to three major signaling pathways, the calcium, the mitogen-activated protein kinase (MAPK) kinase and the nuclear factor NF-kappa-B (NF-kB) pathways, leading to the mobilization of transcription factors that are critical for gene expression and essential for T cell growth and differentiation. The T cell repertoire is generated in the thymus, by V-(D)-J rearrangement. This repertoire is then shaped by intrathymic selection events to generate a peripheral T cell pool of self-MH restricted, non-autoaggressive T cells. Post-thymic interaction of alpha-beta TR with the pMH complexes shapes TR structural and functional avidity. The chain is T cell receptor beta variable 7-7 from Homo sapiens (Human).